Here is a 523-residue protein sequence, read N- to C-terminus: Cytoplasmic dynein 1 light intermediate chain 1 (523 aa).

Positions 1 to 25 are disordered; sequence MAAVGRVGSFGSSPPGLASTYASGP. ATP is bound at residue 74 to 81; it reads GEDGAGKT. Disordered regions lie at residues 200 to 219, 387 to 434, and 457 to 523; these read PGED…QEDR, PPTA…DPNM, and GSPG…GEAS. A Phosphoserine modification is found at Ser-207. Thr-213 carries the post-translational modification Phosphothreonine. Phosphoserine is present on residues Ser-398 and Ser-405. Phosphothreonine is present on Thr-408. A phosphoserine mark is found at Ser-412, Ser-419, Ser-421, and Ser-427. Residues 412–421 show a composition bias toward low complexity; that stretch reads SVSSNVASVS. A compositionally biased stretch (gly residues) spans 458-473; sequence SPGGPGVGGSPGGGAA. Residues 474–485 show a composition bias toward low complexity; it reads GASPSLPPSAKK. Ser-486 and Ser-510 each carry phosphoserine. A compositionally biased stretch (low complexity) spans 506 to 523; that stretch reads PASVSPTTPTSPTEGEAS. Residues Thr-512, Thr-513, and Thr-515 each carry the phosphothreonine modification. Ser-516 carries the post-translational modification Phosphoserine.

Belongs to the dynein light intermediate chain family. In terms of assembly, homodimer. The cytoplasmic dynein 1 complex consists of two catalytic heavy chains (HCs) and a number of non-catalytic subunits presented by intermediate chains (ICs), light intermediate chains (LICs) and light chains (LCs); the composition seems to vary in respect to the IC, LIC and LC composition. The heavy chain homodimer serves as a scaffold for the probable homodimeric assembly of the respective non-catalytic subunits. The ICs and LICs bind directly to the HC dimer and the LCs assemble on the IC dimer. Self-associates. Interacts with DYNC1H1; DYNC1LI1 and DYNC1LI2 bind mutually exclusive to DYNC1H1. Interacts with PCNT. Forms a complex with RAB11FIP3 and RAB11A1; the interaction between DYNC1LI1 and RAB11FIP3 is direct and induces DYNC1LI1 localization onto endosomal membrane; the complex regulates endocytic trafficking. Interacts with RUFY3. Phosphorylated during mitosis but not in interphase.

Its subcellular location is the cytoplasm. It localises to the chromosome. It is found in the centromere. The protein localises to the kinetochore. The protein resides in the cytoskeleton. Its subcellular location is the spindle pole. It localises to the recycling endosome membrane. Acts as one of several non-catalytic accessory components of the cytoplasmic dynein 1 complex that are thought to be involved in linking dynein to cargos and to adapter proteins that regulate dynein function. Cytoplasmic dynein 1 acts as a motor for the intracellular retrograde motility of vesicles and organelles along microtubules. May play a role in binding dynein to membranous organelles or chromosomes. Probably involved in the microtubule-dependent transport of pericentrin. Is required for progress through the spindle assembly checkpoint. The phosphorylated form appears to be involved in the selective removal of MAD1L1 and MAD1L2 but not BUB1B from kinetochores. Forms a functional Rab11/RAB11FIP3/dynein complex onto endosomal membrane that regulates the movement of peripheral sorting endosomes (SE) along microtubule tracks toward the microtubule organizing center/centrosome, generating the endosomal recycling compartment (ERC). The protein is Cytoplasmic dynein 1 light intermediate chain 1 (Dync1li1) of Mus musculus (Mouse).